Here is a 294-residue protein sequence, read N- to C-terminus: Ribosomal RNA small subunit methyltransferase I (294 aa).

Belongs to the methyltransferase superfamily. RsmI family.

It is found in the cytoplasm. It catalyses the reaction cytidine(1402) in 16S rRNA + S-adenosyl-L-methionine = 2'-O-methylcytidine(1402) in 16S rRNA + S-adenosyl-L-homocysteine + H(+). Functionally, catalyzes the 2'-O-methylation of the ribose of cytidine 1402 (C1402) in 16S rRNA. This Mesorhizobium japonicum (strain LMG 29417 / CECT 9101 / MAFF 303099) (Mesorhizobium loti (strain MAFF 303099)) protein is Ribosomal RNA small subunit methyltransferase I.